Here is a 1135-residue protein sequence, read N- to C-terminus: Phytochrome C (1135 aa).

A compositionally biased stretch (polar residues) spans 1 to 11; that stretch reads MSSPLNNRGTC. The tract at residues 1–26 is disordered; it reads MSSPLNNRGTCSRSSSARSRHSARVV. Residues 216-399 enclose the GAF domain; that stretch reads NLSLLCDVLV…VFGIQLNKEV (184 aa). Cysteine 321 contacts phytochromobilin. PAS domains lie at 618–688 and 748–822; these read VTNE…LQGI and IQGD…TKLS. Residues 902-1122 enclose the Histidine kinase domain; that stretch reads YIHQELRNPL…IILIEFPVAQ (221 aa).

It belongs to the phytochrome family. Homodimer. In terms of processing, contains one covalently linked phytochromobilin chromophore.

Its function is as follows. Regulatory photoreceptor which exists in two forms that are reversibly interconvertible by light: the Pr form that absorbs maximally in the red region of the spectrum and the Pfr form that absorbs maximally in the far-red region. Photoconversion of Pr to Pfr induces an array of morphogenic responses, whereas reconversion of Pfr to Pr cancels the induction of those responses. Pfr controls the expression of a number of nuclear genes including those encoding the small subunit of ribulose-bisphosphate carboxylase, chlorophyll A/B binding protein, protochlorophyllide reductase, rRNA, etc. It also controls the expression of its own gene(s) in a negative feedback fashion. The sequence is that of Phytochrome C (PHYC) from Sorghum bicolor (Sorghum).